Reading from the N-terminus, the 510-residue chain is Outer spore wall protein 7 (510 aa).

A signal peptide spans 1–23 (MKAVFKVTTALLACVFIARYLVC). The segment at 167-195 (FETDSETEDYEDDENENEDEDEDEDEDDV) is disordered. Over residues 169 to 195 (TDSETEDYEDDENENEDEDEDEDEDDV) the composition is skewed to acidic residues. Position 354 is a phosphotyrosine (Y354).

The protein belongs to the OSW/SHE family.

Functionally, involved in spore wall assembly. In Saccharomyces cerevisiae (strain ATCC 204508 / S288c) (Baker's yeast), this protein is Outer spore wall protein 7.